The following is a 193-amino-acid chain: Xanthine phosphoribosyltransferase (193 aa).

Leu20 and Asn27 together coordinate xanthine. Ala129–Ala133 provides a ligand contact to 5-phospho-alpha-D-ribose 1-diphosphate. Lys157 provides a ligand contact to xanthine.

This sequence belongs to the purine/pyrimidine phosphoribosyltransferase family. Xpt subfamily. Homodimer.

Its subcellular location is the cytoplasm. It carries out the reaction XMP + diphosphate = xanthine + 5-phospho-alpha-D-ribose 1-diphosphate. It functions in the pathway purine metabolism; XMP biosynthesis via salvage pathway; XMP from xanthine: step 1/1. Its function is as follows. Converts the preformed base xanthine, a product of nucleic acid breakdown, to xanthosine 5'-monophosphate (XMP), so it can be reused for RNA or DNA synthesis. This is Xanthine phosphoribosyltransferase from Bifidobacterium longum subsp. infantis (strain ATCC 15697 / DSM 20088 / JCM 1222 / NCTC 11817 / S12).